The primary structure comprises 214 residues: A-type ATP synthase subunit D (214 aa).

Belongs to the V-ATPase D subunit family. Has multiple subunits with at least A(3), B(3), C, D, E, F, H, I and proteolipid K(x).

Its subcellular location is the cell membrane. Functionally, component of the A-type ATP synthase that produces ATP from ADP in the presence of a proton gradient across the membrane. This Methanosphaera stadtmanae (strain ATCC 43021 / DSM 3091 / JCM 11832 / MCB-3) protein is A-type ATP synthase subunit D.